We begin with the raw amino-acid sequence, 356 residues long: MSKKVLFIDRDGTLINEPLDNFQIDRIEKLVLEPYVINALLILQQANFQLVMVSNQDGLGTSSFPQEDFDRPHNLMMQIFKSQNIFFDQVLICPHLAKDKCHCRKPGIALVAPWLVGNKIDRTKSYVIGDRETDIKLAYNMGINSLRYNRNTMNWQAICNYLTSLNRYAHVKRITKETSINVEVWLDREAPSKINTGINFFDHMLEQIATHSGLCMTIEVKGDLYIDDHHTIEDTAIALGTALKQGLGDKHGINRFGFLLPMDECLARCVIDLSGRPFLEYTAEYSYQKVGDMSTEMVEHFFRSLSYAMACTLYLKTEGKNDHHRVESLFKVFGRALRQAICVESNVLPSSKGVLS.

The interval 1–166 (MSKKVLFIDR…AICNYLTSLN (166 aa)) is histidinol-phosphatase. D9 (nucleophile) is an active-site residue. Mg(2+)-binding residues include D9 and D11. Catalysis depends on D11, which acts as the Proton donor. Zn(2+) is bound by residues C93, H95, C101, and C103. Mg(2+) is bound at residue D130. Residues 167–356 (RYAHVKRITK…VLPSSKGVLS (190 aa)) are imidazoleglycerol-phosphate dehydratase.

This sequence in the N-terminal section; belongs to the histidinol-phosphatase family. The protein in the C-terminal section; belongs to the imidazoleglycerol-phosphate dehydratase family. It depends on Mg(2+) as a cofactor. The cofactor is Zn(2+).

It localises to the cytoplasm. It catalyses the reaction D-erythro-1-(imidazol-4-yl)glycerol 3-phosphate = 3-(imidazol-4-yl)-2-oxopropyl phosphate + H2O. The catalysed reaction is L-histidinol phosphate + H2O = L-histidinol + phosphate. Its pathway is amino-acid biosynthesis; L-histidine biosynthesis; L-histidine from 5-phospho-alpha-D-ribose 1-diphosphate: step 6/9. It functions in the pathway amino-acid biosynthesis; L-histidine biosynthesis; L-histidine from 5-phospho-alpha-D-ribose 1-diphosphate: step 8/9. The chain is Histidine biosynthesis bifunctional protein HisB from Baumannia cicadellinicola subsp. Homalodisca coagulata.